A 247-amino-acid chain; its full sequence is Ubiquinone biosynthesis O-methyltransferase (247 aa).

S-adenosyl-L-methionine-binding residues include arginine 45, glycine 65, aspartate 86, and leucine 130.

Belongs to the methyltransferase superfamily. UbiG/COQ3 family.

It catalyses the reaction a 3-demethylubiquinol + S-adenosyl-L-methionine = a ubiquinol + S-adenosyl-L-homocysteine + H(+). The catalysed reaction is a 3-(all-trans-polyprenyl)benzene-1,2-diol + S-adenosyl-L-methionine = a 2-methoxy-6-(all-trans-polyprenyl)phenol + S-adenosyl-L-homocysteine + H(+). It participates in cofactor biosynthesis; ubiquinone biosynthesis. O-methyltransferase that catalyzes the 2 O-methylation steps in the ubiquinone biosynthetic pathway. The polypeptide is Ubiquinone biosynthesis O-methyltransferase (Alkalilimnicola ehrlichii (strain ATCC BAA-1101 / DSM 17681 / MLHE-1)).